The chain runs to 223 residues: Ribonuclease 3 (223 aa).

The region spanning 3–125 (LEKLQKKLGH…LIAAIYLDAG (123 aa)) is the RNase III domain. A Mg(2+)-binding site is contributed by glutamate 38. Aspartate 42 is a catalytic residue. Residues aspartate 111 and glutamate 114 each coordinate Mg(2+). Glutamate 114 is an active-site residue. Residues 152–222 (DPKTRLQEFL…AQQAIEKLKI (71 aa)) enclose the DRBM domain.

This sequence belongs to the ribonuclease III family. Homodimer. Mg(2+) serves as cofactor.

The protein resides in the cytoplasm. It carries out the reaction Endonucleolytic cleavage to 5'-phosphomonoester.. In terms of biological role, digests double-stranded RNA. Involved in the processing of primary rRNA transcript to yield the immediate precursors to the large and small rRNAs (23S and 16S). Processes some mRNAs, and tRNAs when they are encoded in the rRNA operon. Processes pre-crRNA and tracrRNA of type II CRISPR loci if present in the organism. The sequence is that of Ribonuclease 3 from Histophilus somni (strain 2336) (Haemophilus somnus).